We begin with the raw amino-acid sequence, 110 residues long: Large ribosomal subunit protein P2B (110 aa).

Ser-29 carries the phosphoserine modification. A Glycyl lysine isopeptide (Lys-Gly) (interchain with G-Cter in ubiquitin) cross-link involves residue Lys-49. Residues 66–110 (VPTGGASSAAAGAAGAAAGGDAAEEEKEEEAKEESDDDMGFGLFD) form a disordered region. Positions 69-86 (GGASSAAAGAAGAAAGGD) are enriched in low complexity. Residues 87-104 (AAEEEKEEEAKEESDDDM) are compositionally biased toward acidic residues. A Phosphoserine modification is found at Ser-100.

It belongs to the eukaryotic ribosomal protein P1/P2 family. As to quaternary structure, component of the large ribosomal subunit (LSU). Mature yeast ribosomes consist of a small (40S) and a large (60S) subunit. The 40S small subunit contains 1 molecule of ribosomal RNA (18S rRNA) and 33 different proteins (encoded by 57 genes). The large 60S subunit contains 3 rRNA molecules (25S, 5.8S and 5S rRNA) and 46 different proteins (encoded by 81 genes). The 5 acidic ribosomal P-proteins form the stalk structure of the 60S subunit. They are organized as a pentameric complex in which uL10/P0 interacts with 2 heterodimers, P1A-P2B and P1B-P2A. In terms of processing, the N-terminus is not modified.

The protein resides in the cytoplasm. Functionally, component of the ribosome, a large ribonucleoprotein complex responsible for the synthesis of proteins in the cell. The small ribosomal subunit (SSU) binds messenger RNAs (mRNAs) and translates the encoded message by selecting cognate aminoacyl-transfer RNA (tRNA) molecules. The large subunit (LSU) contains the ribosomal catalytic site termed the peptidyl transferase center (PTC), which catalyzes the formation of peptide bonds, thereby polymerizing the amino acids delivered by tRNAs into a polypeptide chain. The nascent polypeptides leave the ribosome through a tunnel in the LSU and interact with protein factors that function in enzymatic processing, targeting, and the membrane insertion of nascent chains at the exit of the ribosomal tunnel. This Saccharomyces cerevisiae (strain ATCC 204508 / S288c) (Baker's yeast) protein is Large ribosomal subunit protein P2B.